The chain runs to 380 residues: NF-kappa-B inhibitor-like protein 1 (380 aa).

The segment at 1-34 is disordered; it reads MSNPSPQVPEGEASTSVCRPKSSMASTSRRQRRE. Over residues 13–28 the composition is skewed to polar residues; the sequence is ASTSVCRPKSSMASTS. 2 ANK repeats span residues 64-93 and 97-133; these read GQPP…DPAH and HGDT…IKNK. Disordered regions lie at residues 131 to 167 and 185 to 293; these read KNKD…EWRQ and EDDA…RGSL. The residue at position 150 (Ser150) is a Phosphoserine. A compositionally biased stretch (acidic residues) spans 150–159; that stretch reads SAEEEEEDEA. 2 stretches are compositionally biased toward basic and acidic residues: residues 204–221 and 236–272; these read RMAR…ETEG and RQQE…RDPV.

Interacts with CACTIN (via N-terminal domain); the interaction occurs in a pro-inflammatory-independent manner.

It is found in the nucleus. Its function is as follows. Involved in the regulation of innate immune response. Acts as negative regulator of Toll-like receptor and interferon-regulatory factor (IRF) signaling pathways. Contributes to the negative regulation of transcriptional activation of NF-kappa-B target genes in response to endogenous pro-inflammatory stimuli. The sequence is that of NF-kappa-B inhibitor-like protein 1 (NFKBIL1) from Sus scrofa (Pig).